The chain runs to 557 residues: Beta-amylase 2, chloroplastic (557 aa).

The N-terminal 38 residues, 1–38 (MMSLNLAHQTGAAAAVAPAAPRTAVVAAAAGTVSAPAV), are a transit peptide targeting the chloroplast. D135, H175, and D183 together coordinate substrate. The Proton donor role is filled by E267. Residues K380, H385, and T427 each coordinate substrate. Catalysis depends on E465, which acts as the Proton acceptor. Substrate-binding positions include 466–467 (NA) and R499.

It belongs to the glycosyl hydrolase 14 family.

Its subcellular location is the plastid. It is found in the chloroplast. The enzyme catalyses Hydrolysis of (1-&gt;4)-alpha-D-glucosidic linkages in polysaccharides so as to remove successive maltose units from the non-reducing ends of the chains.. Functionally, possesses beta-amylase activity in vitro. May be involved in cold resistance by mediating the accumulation of maltose upon freezing stress, thus contributing to the protection of membranes. The protein is Beta-amylase 2, chloroplastic of Oryza sativa subsp. japonica (Rice).